Reading from the N-terminus, the 292-residue chain is Bifunctional protein FolD (292 aa).

Residues 169–171 (GRG), Thr-196, and Val-237 contribute to the NADP(+) site.

This sequence belongs to the tetrahydrofolate dehydrogenase/cyclohydrolase family. Homodimer.

The catalysed reaction is (6R)-5,10-methylene-5,6,7,8-tetrahydrofolate + NADP(+) = (6R)-5,10-methenyltetrahydrofolate + NADPH. The enzyme catalyses (6R)-5,10-methenyltetrahydrofolate + H2O = (6R)-10-formyltetrahydrofolate + H(+). It participates in one-carbon metabolism; tetrahydrofolate interconversion. Functionally, catalyzes the oxidation of 5,10-methylenetetrahydrofolate to 5,10-methenyltetrahydrofolate and then the hydrolysis of 5,10-methenyltetrahydrofolate to 10-formyltetrahydrofolate. The sequence is that of Bifunctional protein FolD from Bifidobacterium longum (strain NCC 2705).